Here is a 207-residue protein sequence, read N- to C-terminus: Intraflagellar transport protein 43 homolog A (207 aa).

Residues 1–104 form a disordered region; that stretch reads MDDNLQLGDS…GSDDEGDIPV (104 aa).

Belongs to the IFT43 family. Component of IFT complex A.

In terms of biological role, component of IFT complex A (IFT-A) involved in retrograde ciliary transport along microtubules from the ciliary tip to the base. The chain is Intraflagellar transport protein 43 homolog A (ift43a) from Salmo salar (Atlantic salmon).